Consider the following 224-residue polypeptide: Thymidylate kinase (224 aa).

13-20 (GGEGAGKS) lines the ATP pocket.

Belongs to the thymidylate kinase family.

It catalyses the reaction dTMP + ATP = dTDP + ADP. Its function is as follows. Phosphorylation of dTMP to form dTDP in both de novo and salvage pathways of dTTP synthesis. This is Thymidylate kinase from Agrobacterium fabrum (strain C58 / ATCC 33970) (Agrobacterium tumefaciens (strain C58)).